Here is a 224-residue protein sequence, read N- to C-terminus: UPF0173 metal-dependent hydrolase TK0141 (224 aa).

The protein belongs to the UPF0173 family.

In Thermococcus kodakarensis (strain ATCC BAA-918 / JCM 12380 / KOD1) (Pyrococcus kodakaraensis (strain KOD1)), this protein is UPF0173 metal-dependent hydrolase TK0141.